The primary structure comprises 306 residues: Porphobilinogen deaminase (306 aa).

An S-(dipyrrolylmethanemethyl)cysteine modification is found at Cys239.

It belongs to the HMBS family. As to quaternary structure, monomer. The cofactor is dipyrromethane.

It carries out the reaction 4 porphobilinogen + H2O = hydroxymethylbilane + 4 NH4(+). Its pathway is porphyrin-containing compound metabolism; protoporphyrin-IX biosynthesis; coproporphyrinogen-III from 5-aminolevulinate: step 2/4. In terms of biological role, tetrapolymerization of the monopyrrole PBG into the hydroxymethylbilane pre-uroporphyrinogen in several discrete steps. This Helicobacter pylori (strain J99 / ATCC 700824) (Campylobacter pylori J99) protein is Porphobilinogen deaminase (hemC).